Reading from the N-terminus, the 447-residue chain is Lipid II isoglutaminyl synthase (glutamine-hydrolyzing) subunit MurT (447 aa).

Residues cysteine 205, cysteine 208, cysteine 227, and cysteine 230 each contribute to the Zn(2+) site. Aspartate 355 is an active-site residue.

It belongs to the MurCDEF family. MurT subfamily. In terms of assembly, forms a heterodimer with GatD.

The enzyme catalyses beta-D-GlcNAc-(1-&gt;4)-Mur2Ac(oyl-L-Ala-gamma-D-Glu-L-Lys-D-Ala-D-Ala)-di-trans,octa-cis-undecaprenyl diphosphate + L-glutamine + ATP + H2O = beta-D-GlcNAc-(1-&gt;4)-Mur2Ac(oyl-L-Ala-D-isoglutaminyl-L-Lys-D-Ala-D-Ala)-di-trans,octa-cis-undecaprenyl diphosphate + L-glutamate + ADP + phosphate + H(+). It carries out the reaction beta-D-GlcNAc-(1-&gt;4)-Mur2Ac(oyl-L-Ala-gamma-D-Glu-L-Lys-D-Ala-D-Ala)-di-trans,octa-cis-undecaprenyl diphosphate + ATP = beta-D-GlcNAc-(1-&gt;4)-Mur2Ac(oyl-L-Ala-gamma-D-O-P-Glu-L-Lys-D-Ala-D-Ala)-di-trans,octa-cis-undecaprenyl diphosphate + ADP. It catalyses the reaction beta-D-GlcNAc-(1-&gt;4)-Mur2Ac(oyl-L-Ala-gamma-D-O-P-Glu-L-Lys-D-Ala-D-Ala)-di-trans,octa-cis-undecaprenyl diphosphate + NH4(+) = beta-D-GlcNAc-(1-&gt;4)-Mur2Ac(oyl-L-Ala-D-isoglutaminyl-L-Lys-D-Ala-D-Ala)-di-trans,octa-cis-undecaprenyl diphosphate + phosphate + H(+). Its pathway is cell wall biogenesis; peptidoglycan biosynthesis. Its function is as follows. The lipid II isoglutaminyl synthase complex catalyzes the formation of alpha-D-isoglutamine in the cell wall lipid II stem peptide. The MurT subunit catalyzes the ATP-dependent amidation of D-glutamate residue of lipid II, converting it to an isoglutamine residue. This chain is Lipid II isoglutaminyl synthase (glutamine-hydrolyzing) subunit MurT, found in Streptococcus pneumoniae (strain ATCC BAA-255 / R6).